Here is a 348-residue protein sequence, read N- to C-terminus: Dihydroorotase (348 aa).

Zn(2+)-binding residues include His-14 and His-16. Residues 16 to 18 (HLR) and Asn-42 each bind substrate. The Zn(2+) site is built by Lys-100, His-137, and His-175. Residue Lys-100 is modified to N6-carboxylysine. His-137 contacts substrate. Leu-220 is a binding site for substrate. Asp-248 provides a ligand contact to Zn(2+). The active site involves Asp-248. Residues His-252 and Ala-264 each contribute to the substrate site.

The protein belongs to the metallo-dependent hydrolases superfamily. DHOase family. Class II DHOase subfamily. As to quaternary structure, homodimer. The cofactor is Zn(2+).

It carries out the reaction (S)-dihydroorotate + H2O = N-carbamoyl-L-aspartate + H(+). It participates in pyrimidine metabolism; UMP biosynthesis via de novo pathway; (S)-dihydroorotate from bicarbonate: step 3/3. Catalyzes the reversible cyclization of carbamoyl aspartate to dihydroorotate. In Pseudomonas fluorescens (strain ATCC BAA-477 / NRRL B-23932 / Pf-5), this protein is Dihydroorotase.